A 593-amino-acid chain; its full sequence is Brain-enriched guanylate kinase-associated protein (593 aa).

At Met1 the chain carries N-acetylmethionine. Tyr137 is modified (phosphotyrosine). Residues Ser200, Ser229, Ser246, Ser265, Ser346, and Ser373 each carry the phosphoserine modification. Arg381 is modified (asymmetric dimethylarginine). Ser455, Ser465, Ser475, Ser477, Ser500, Ser502, Ser506, Ser553, and Ser563 each carry phosphoserine. Positions 499–593 (LSLSPGRSAD…KAQLYGTLLN (95 aa)) are disordered.

As to quaternary structure, interacts with DLG4 and DLGAP1 and forms a ternary complex.

It is found in the cytoplasm. Its subcellular location is the membrane. Its function is as follows. May sustain the structure of the postsynaptic density (PSD). The sequence is that of Brain-enriched guanylate kinase-associated protein (BEGAIN) from Homo sapiens (Human).